Reading from the N-terminus, the 241-residue chain is Geranylgeranylglyceryl phosphate synthase (241 aa).

2 residues coordinate Mg(2+): D26 and S52. Residues 172 to 178, 204 to 205, and 226 to 227 contribute to the sn-glycerol 1-phosphate site; these read YFEAGSG, GG, and GT.

It belongs to the GGGP/HepGP synthase family. Group II subfamily. Mg(2+) is required as a cofactor.

The protein localises to the cytoplasm. It carries out the reaction sn-glycerol 1-phosphate + (2E,6E,10E)-geranylgeranyl diphosphate = sn-3-O-(geranylgeranyl)glycerol 1-phosphate + diphosphate. Its pathway is membrane lipid metabolism; glycerophospholipid metabolism. Prenyltransferase that catalyzes the transfer of the geranylgeranyl moiety of geranylgeranyl diphosphate (GGPP) to the C3 hydroxyl of sn-glycerol-1-phosphate (G1P). This reaction is the first ether-bond-formation step in the biosynthesis of archaeal membrane lipids. In Hyperthermus butylicus (strain DSM 5456 / JCM 9403 / PLM1-5), this protein is Geranylgeranylglyceryl phosphate synthase.